Consider the following 197-residue polypeptide: Pyridoxal 5'-phosphate synthase subunit PdxT (197 aa).

L-glutamine is bound at residue 53-55; the sequence is GES. Catalysis depends on Cys-85, which acts as the Nucleophile. Residues Arg-114 and 142-143 contribute to the L-glutamine site; that span reads IR. Active-site charge relay system residues include His-179 and Glu-181.

This sequence belongs to the glutaminase PdxT/SNO family. In terms of assembly, in the presence of PdxS, forms a dodecamer of heterodimers. Only shows activity in the heterodimer.

The enzyme catalyses aldehydo-D-ribose 5-phosphate + D-glyceraldehyde 3-phosphate + L-glutamine = pyridoxal 5'-phosphate + L-glutamate + phosphate + 3 H2O + H(+). The catalysed reaction is L-glutamine + H2O = L-glutamate + NH4(+). The protein operates within cofactor biosynthesis; pyridoxal 5'-phosphate biosynthesis. Functionally, catalyzes the hydrolysis of glutamine to glutamate and ammonia as part of the biosynthesis of pyridoxal 5'-phosphate. The resulting ammonia molecule is channeled to the active site of PdxS. This chain is Pyridoxal 5'-phosphate synthase subunit PdxT, found in Thermococcus onnurineus (strain NA1).